The sequence spans 657 residues: MGGEDYYLELCERPVQFEKANPVNCVFFDEANKQVFAVRSGGATGVVVKGPDDRNPISFRMDDRGEVKCIKFSLENKILAVQRTAKAVDFCNFIPDNSQLEYTQECKTKNANILGFCWTSSTEIVFITDQGIEFYQVMPEKRSLKLLKSHNINVNWYTYCPESAVILLSTTVLENVLQPFHFRAGTMSKLPKFEIELPAAPKSTKLSLSERDIAMATIYGQLYILFLRHHSRTSNSTGAEVVLYHLPREGACKKMHILKLNRTGKFALNVVDNLVVVHHQDTETSVIFDIRLRGEFDGTVTFHHPVLPARSIQPYEIPLAGPAAVTSQSPVPCKLYSSSWIVFQPDIIISASQGYLWNLQVKLQPIVNLLPDKGRLMDFLLQRKECKAVVLSVCSQMLSESDRATLPVIATVFDKLNHEYKKYLDADQSYTMAVEAGQSRSNPPLKRPVRTQAVVDQSDVYTQVLSPFVENKEMPHKFVIAVLMEYIRSLNQFQIPVQHYLHELVIKTLVQHNLFYMLHQFLQYHVLSDSKPLACLLLSLESFYPPAHQLSLDMLKRLSTANDEIVEVLLSKHQVLAALRFIRGIGGHDNISARKFLDAARQTDDVMLFYTIFRFFEQRNQRLRGNPNFTPGEHCEEHVAFFKQVFGEQALMRPTTF.

The region spanning 471–637 (NKEMPHKFVI…NFTPGEHCEE (167 aa)) is the Mic1 domain.

It belongs to the RMC1 family. As to quaternary structure, found in a complex with RMC1, CCZ1, MON1A and MON1B. In terms of tissue distribution, highly expressed in heart, brain, spleen, lung, liver, skeletal muscle, kidney and testis.

It is found in the lysosome membrane. The protein localises to the late endosome membrane. Component of the CCZ1-MON1 RAB7A guanine exchange factor (GEF). Acts as a positive regulator of CCZ1-MON1A/B function necessary for endosomal/autophagic flux and efficient RAB7A localization. The chain is Regulator of MON1-CCZ1 complex (Rmc1) from Mus musculus (Mouse).